A 459-amino-acid polypeptide reads, in one-letter code: Lipase 4 (459 aa).

An N-terminal signal peptide occupies residues 1 to 14 (MLFLLFLLVAPIYA). A disulfide bond links Cys-110 and Cys-281. Catalysis depends on Ser-194, which acts as the Charge relay system. N-linked (GlcNAc...) asparagine glycosylation is found at Asn-229 and Asn-266. Residues Asp-343 and His-376 each act as charge relay system in the active site. Cysteines 359 and 404 form a disulfide.

Belongs to the AB hydrolase superfamily. Lipase family. Class Lip subfamily.

It localises to the secreted. It carries out the reaction a triacylglycerol + H2O = a diacylglycerol + a fatty acid + H(+). Its function is as follows. Secreted lipase that is able to hydrolyze both the neutral triacylglycerols and the monopalmitate ester Tween 40, allowing the use of hydrolyzed products as carbon sources. Has broad lipolytic activity, which may be important for colonization and subsequent infection, therefore contributing to the persistence and virulence in human tissue. The protein is Lipase 4 of Candida albicans (strain SC5314 / ATCC MYA-2876) (Yeast).